We begin with the raw amino-acid sequence, 264 residues long: Undecaprenyl-diphosphatase (264 aa).

A run of 8 helical transmembrane segments spans residues 1–21 (MDLIHVVVLALIQGITEFLPI), 39–59 (QGLAFDVAVHVGTLTAVAVYF), 87–107 (WYLIAATIPAALFGLIFDDLI), 111–131 (LRSTDVIATTTLVFGVLLWVA), 144–164 (IALSTAMIIGLAQAVALIPGT), 187–207 (FSFLLSIPVIVLSGGYKGLQL), 208–228 (VLSAAAVDWLAIGLGIALSAV), and 244–264 (IGMLPFVIYRLLLGVLLFIAV).

Belongs to the UppP family.

It is found in the cell inner membrane. It carries out the reaction di-trans,octa-cis-undecaprenyl diphosphate + H2O = di-trans,octa-cis-undecaprenyl phosphate + phosphate + H(+). In terms of biological role, catalyzes the dephosphorylation of undecaprenyl diphosphate (UPP). Confers resistance to bacitracin. The polypeptide is Undecaprenyl-diphosphatase (Teredinibacter turnerae (strain ATCC 39867 / T7901)).